A 305-amino-acid polypeptide reads, in one-letter code: Protoheme IX farnesyltransferase (305 aa).

The next 9 membrane-spanning stretches (helical) occupy residues 29-49 (VTQL…PGMV), 51-71 (WSVL…AFAI), 101-121 (TLIF…VFAN), 123-143 (LTMW…TILL), 151-171 (IVIG…AVSG), 177-197 (AWFL…ALAL), 221-241 (LLHI…PFVY), 244-264 (SGYI…GYAW), and 283-303 (ILYL…KFVP).

It belongs to the UbiA prenyltransferase family. Protoheme IX farnesyltransferase subfamily.

The protein localises to the cell inner membrane. The enzyme catalyses heme b + (2E,6E)-farnesyl diphosphate + H2O = Fe(II)-heme o + diphosphate. Its pathway is porphyrin-containing compound metabolism; heme O biosynthesis; heme O from protoheme: step 1/1. Functionally, converts heme B (protoheme IX) to heme O by substitution of the vinyl group on carbon 2 of heme B porphyrin ring with a hydroxyethyl farnesyl side group. The polypeptide is Protoheme IX farnesyltransferase (Cupriavidus metallidurans (strain ATCC 43123 / DSM 2839 / NBRC 102507 / CH34) (Ralstonia metallidurans)).